The sequence spans 454 residues: UDP-N-acetylmuramoylalanine--D-glutamate ligase (454 aa).

114–120 (GTNGKTT) contributes to the ATP binding site.

The protein belongs to the MurCDEF family.

It is found in the cytoplasm. The enzyme catalyses UDP-N-acetyl-alpha-D-muramoyl-L-alanine + D-glutamate + ATP = UDP-N-acetyl-alpha-D-muramoyl-L-alanyl-D-glutamate + ADP + phosphate + H(+). It participates in cell wall biogenesis; peptidoglycan biosynthesis. Cell wall formation. Catalyzes the addition of glutamate to the nucleotide precursor UDP-N-acetylmuramoyl-L-alanine (UMA). The protein is UDP-N-acetylmuramoylalanine--D-glutamate ligase of Desulfitobacterium hafniense (strain DSM 10664 / DCB-2).